The primary structure comprises 305 residues: Glycine--tRNA ligase alpha subunit (305 aa).

Belongs to the class-II aminoacyl-tRNA synthetase family. In terms of assembly, tetramer of two alpha and two beta subunits.

It localises to the cytoplasm. The enzyme catalyses tRNA(Gly) + glycine + ATP = glycyl-tRNA(Gly) + AMP + diphosphate. This Streptococcus pneumoniae (strain 70585) protein is Glycine--tRNA ligase alpha subunit.